A 185-amino-acid chain; its full sequence is Small ribosomal subunit protein uS5 (185 aa).

In terms of domain architecture, S5 DRBM spans 18 to 81 (FVDKLVHINR…ESAKRALIRV (64 aa)).

Belongs to the universal ribosomal protein uS5 family. Part of the 30S ribosomal subunit. Contacts proteins S4 and S8.

With S4 and S12 plays an important role in translational accuracy. Functionally, located at the back of the 30S subunit body where it stabilizes the conformation of the head with respect to the body. The polypeptide is Small ribosomal subunit protein uS5 (Azorhizobium caulinodans (strain ATCC 43989 / DSM 5975 / JCM 20966 / LMG 6465 / NBRC 14845 / NCIMB 13405 / ORS 571)).